Consider the following 520-residue polypeptide: GMP synthase [glutamine-hydrolyzing] (520 aa).

Residues 12-205 (KIIVLDYGSQ…AISICGARGD (194 aa)) enclose the Glutamine amidotransferase type-1 domain. The Nucleophile role is filled by Cys89. Catalysis depends on residues His179 and Glu181. The region spanning 206-395 (WSMDNFIDME…LGMPEEIVWR (190 aa)) is the GMPS ATP-PPase domain. 233–239 (SGGVDSS) provides a ligand contact to ATP.

Homodimer.

The enzyme catalyses XMP + L-glutamine + ATP + H2O = GMP + L-glutamate + AMP + diphosphate + 2 H(+). It participates in purine metabolism; GMP biosynthesis; GMP from XMP (L-Gln route): step 1/1. Catalyzes the synthesis of GMP from XMP. This Streptococcus pyogenes serotype M1 protein is GMP synthase [glutamine-hydrolyzing].